Consider the following 363-residue polypeptide: Ribonuclease P protein subunit p40 (363 aa).

In terms of assembly, component of nuclear RNase P and RNase MRP ribonucleoproteins. RNase P consists of a catalytic RNA moiety and about 10 protein subunits; POP1, POP4, POP5, POP7, RPP14, RPP21, RPP25, RPP30, RPP38 and RPP40. Within the RNase P complex, POP1, POP7 and RPP25 form the 'finger' subcomplex, POP5, RPP14, RPP40 and homodimeric RPP30 form the 'palm' subcomplex, and RPP21, POP4 and RPP38 form the 'wrist' subcomplex. All subunits of the RNase P complex interact with the catalytic RNA. Several subunits of RNase P are also part of the RNase MRP complex. RNase MRP consists of a catalytic RNA moiety and about 8 protein subunits; POP1, POP7, RPP25, RPP30, RPP38, RPP40 and possibly also POP4 and POP5.

The protein resides in the nucleus. The protein localises to the nucleolus. In terms of biological role, component of ribonuclease P, a ribonucleoprotein complex that generates mature tRNA molecules by cleaving their 5'-ends. Also a component of the MRP ribonuclease complex, which cleaves pre-rRNA sequences. The sequence is that of Ribonuclease P protein subunit p40 (Rpp40) from Mus musculus (Mouse).